The following is a 330-amino-acid chain: Solute carrier family 25 member 16 (330 aa).

Solcar repeat units follow at residues 32 to 118 (FYWL…YKTL), 126 to 214 (SGHV…LKSV), and 236 to 326 (LKTH…MKQF). The next 6 helical transmembrane spans lie at 33–52 (YWLR…KTTV), 95–112 (GAMM…FMAF), 132–149 (LMAG…TYPL), 189–209 (GLMP…FTFG), 242–262 (LLCG…FDVT), and 297–317 (GLYR…AVAF).

This sequence belongs to the mitochondrial carrier (TC 2.A.29) family. Mostly in thyroid, liver, lung, kidney and to a lesser extent in heart and skeletal muscle.

Its subcellular location is the mitochondrion inner membrane. Its function is as follows. May be involved in the transport of coenzyme A in the mitochondrial matrix. Very little is known about the physiological function of this carrier. This is Solute carrier family 25 member 16 (SLC25A16) from Bos taurus (Bovine).